The following is a 375-amino-acid chain: Oleosin-B6 (375 aa).

Positions 1-32 (MKEEIQNETAQTQLQREGRMFSFLFPVIEVIK) are polar. Transmembrane regions (helical) follow at residues 21–43 (FSFLFPVIEVIKVVMASVASVVF), 55–75 (AVALAVSTPLFIIFSPILVPA), and 81–101 (LLATGLGAGTTLGVTGMGLLM). The hydrophobic stretch occupies residues 33-112 (VVMASVASVV…LIKHPGKEGA (80 aa)). Disordered regions lie at residues 144–284 (PGVG…SFLS) and 303–375 (IPGF…DESS). Residues 148 to 179 (KKSEGRGESKGKKGKKGKSEHGRGKHEGEGKS) show a composition bias toward basic and acidic residues. Positions 193 to 210 (NNPPPAGAPPTGSPPAAP) are enriched in pro residues. 23 tandem repeats follow at residues 207–209 (PAA), 210–212 (PAA), 213–215 (PEA), 216–218 (PAA), 219–221 (PAA), 222–224 (PAA), 225–227 (PAA), 228–230 (PAA), 231–233 (PAA), 234–236 (PAA), 237–239 (PED), 240–242 (PAA), 243–245 (PAA), 246–248 (PEA), 249–251 (PAT), 252–254 (PAA), 255–257 (PPA), 258–260 (PAA), 261–263 (APA), 264–266 (PAA), 267–269 (PAA), 270–272 (PPA), and 273–275 (PAA). Positions 207–275 (PAAPAAPEAP…APAAPPAPAA (69 aa)) are 23 X 3 AA approximate tandem repeats of P-A-A. The span at 211-251 (AAPEAPAAPAAPAAPAAPAAPAAPAAPEDPAAPAAPEAPAT) shows a compositional bias: low complexity. Residues 252–280 (PAAPPAPAAAPAPAAPAAPPAPAAPPRPP) are compositionally biased toward pro residues. Residues 316–331 (SKGGKKSKGKGKSNGR) are compositionally biased toward basic residues.

The protein belongs to the oleosin family. As to expression, the full-length protein is found in the tapetal lipid bodies of immature anthers, the proteolytically cleaved C-terminal product is found on the coats of pollen grains. Not found in flowers, developing embryos or leaf tissue.

Its subcellular location is the lipid droplet. It is found in the membrane. Its function is as follows. Many of the major pollen coat proteins are derived from endoproteolytic cleavage of oleosin-like proteins. The sequence is that of Oleosin-B6 from Brassica napus (Rape).